A 254-amino-acid chain; its full sequence is 2,3-bisphosphoglycerate-dependent phosphoglycerate mutase (254 aa).

Substrate-binding positions include 15 to 22, 28 to 29, Arg-67, 94 to 97, Lys-105, 121 to 122, and 188 to 189; these read RHGQSEWN, TG, ERHY, RR, and GN. His-16 serves as the catalytic Tele-phosphohistidine intermediate. Catalysis depends on Glu-94, which acts as the Proton donor/acceptor.

It belongs to the phosphoglycerate mutase family. BPG-dependent PGAM subfamily.

It catalyses the reaction (2R)-2-phosphoglycerate = (2R)-3-phosphoglycerate. It participates in carbohydrate degradation; glycolysis; pyruvate from D-glyceraldehyde 3-phosphate: step 3/5. Catalyzes the interconversion of 2-phosphoglycerate and 3-phosphoglycerate. In Corynebacterium jeikeium (strain K411), this protein is 2,3-bisphosphoglycerate-dependent phosphoglycerate mutase.